Reading from the N-terminus, the 404-residue chain is NADH-quinone oxidoreductase subunit D 2 (404 aa).

It belongs to the complex I 49 kDa subunit family. NDH-1 is composed of 14 different subunits. Subunits NuoB, C, D, E, F, and G constitute the peripheral sector of the complex.

It is found in the cell inner membrane. The enzyme catalyses a quinone + NADH + 5 H(+)(in) = a quinol + NAD(+) + 4 H(+)(out). Its function is as follows. NDH-1 shuttles electrons from NADH, via FMN and iron-sulfur (Fe-S) centers, to quinones in the respiratory chain. The immediate electron acceptor for the enzyme in this species is believed to be ubiquinone. Couples the redox reaction to proton translocation (for every two electrons transferred, four hydrogen ions are translocated across the cytoplasmic membrane), and thus conserves the redox energy in a proton gradient. The protein is NADH-quinone oxidoreductase subunit D 2 of Rhizobium etli (strain CIAT 652).